A 268-amino-acid chain; its full sequence is 4-hydroxy-tetrahydrodipicolinate reductase (268 aa).

NAD(+) contacts are provided by residues 10–15 (GASGRM), Asp-36, 99–101 (GTT), and 123–126 (APNM). Catalysis depends on His-156, which acts as the Proton donor/acceptor. Residue His-157 participates in (S)-2,3,4,5-tetrahydrodipicolinate binding. Residue Lys-160 is the Proton donor of the active site. Residue 166–167 (GT) coordinates (S)-2,3,4,5-tetrahydrodipicolinate.

Belongs to the DapB family.

The protein resides in the cytoplasm. The catalysed reaction is (S)-2,3,4,5-tetrahydrodipicolinate + NAD(+) + H2O = (2S,4S)-4-hydroxy-2,3,4,5-tetrahydrodipicolinate + NADH + H(+). It catalyses the reaction (S)-2,3,4,5-tetrahydrodipicolinate + NADP(+) + H2O = (2S,4S)-4-hydroxy-2,3,4,5-tetrahydrodipicolinate + NADPH + H(+). It functions in the pathway amino-acid biosynthesis; L-lysine biosynthesis via DAP pathway; (S)-tetrahydrodipicolinate from L-aspartate: step 4/4. Functionally, catalyzes the conversion of 4-hydroxy-tetrahydrodipicolinate (HTPA) to tetrahydrodipicolinate. This chain is 4-hydroxy-tetrahydrodipicolinate reductase, found in Herminiimonas arsenicoxydans.